We begin with the raw amino-acid sequence, 551 residues long: MLYKLLNVLWLVAVSNAIPGTPVIDWADRNYALVEINYEATAYENLIKPKEQVDVQVSWNVWNGDIGDIAYVLFDEQQVWKGDAESKRATIKVLVSGQFNMRVKLCNEDGCSVSDPVLVKVADTDGGHLAPLEYTWLENNKPGRREDKIVAAYFVEWGVYGRNFPVDKVPLPNLSHLLYGFIPICGGDGINDALKTIPGSFESLQRSCKGREDFKVAIHDPWAAVQKPQKGVSAWNEPYKGNFGQLMAAKLANPHLKILPSIGGWTLSDPFYFMHDVEKRNVFVDSVKEFLQVWKFFDGVDIDWEFPGGKGANPSLGDADGDAKTYILLLEELRAMLDDLEAQTGRVYELTSAISAGYDKIAVVNYAEAQKSLGKIFLMSYDFKGAWSNTDLGYQTTVYAPSWNSEELYTTHYAVDALLKQGVDPNKIIVGVAMYGRGWTGVTNYTNDNYFSGTGNGPGSGTWEDGVVDYRQIQKDLNNYVYTFDSAAQASYVFDKSKGDLISFDSVDSVLGKVKYVDRNKLGGLFAWEIDADNGDLLNAINAQFKPKDEL.

The first 17 residues, 1–17, serve as a signal peptide directing secretion; it reads MLYKLLNVLWLVAVSNA. Residues 1–149 are chitin binding domain (CBD); sequence MLYKLLNVLW…NKPGRREDKI (149 aa). The region spanning 148–548 is the GH18 domain; sequence KIVAAYFVEW…NAINAQFKPK (401 aa). Asn-173 carries N-linked (GlcNAc...) asparagine; by host glycosylation. Glu-305 (proton donor) is an active-site residue. The N-linked (GlcNAc...) asparagine; by host glycan is linked to Asn-444. A Prevents secretion from ER motif is present at residues 548 to 551; sequence KDEL.

This sequence belongs to the glycosyl hydrolase 18 family. Chitinase class II subfamily. Interacts with host VCATH.

The protein localises to the host endoplasmic reticulum lumen. The catalysed reaction is Random endo-hydrolysis of N-acetyl-beta-D-glucosaminide (1-&gt;4)-beta-linkages in chitin and chitodextrins.. Its function is as follows. Plays a role in host liquefaction to facilitate horizontal transmission of the virus by hydrolyzing beta-chitin and by regulating the cysteine protease VCATH. Localized in the host reticulum endoplasmic via its KDEL motif, interacts with and thus prevents VCATH secretion before host cell lysis occurs. In Lepidoptera (butterflies and moths), this protein is Chitinase (CHIA).